A 483-amino-acid polypeptide reads, in one-letter code: Protein nucleotidyltransferase YdiU (483 aa).

8 residues coordinate ATP: Gly100, Gly102, Arg103, Lys123, Asp135, Gly136, Arg189, and Arg196. Asp265 acts as the Proton acceptor in catalysis. Mg(2+) contacts are provided by Asn266 and Asp275. Asp275 lines the ATP pocket.

Belongs to the SELO family. It depends on Mg(2+) as a cofactor. Mn(2+) is required as a cofactor.

It carries out the reaction L-seryl-[protein] + ATP = 3-O-(5'-adenylyl)-L-seryl-[protein] + diphosphate. It catalyses the reaction L-threonyl-[protein] + ATP = 3-O-(5'-adenylyl)-L-threonyl-[protein] + diphosphate. The catalysed reaction is L-tyrosyl-[protein] + ATP = O-(5'-adenylyl)-L-tyrosyl-[protein] + diphosphate. The enzyme catalyses L-histidyl-[protein] + UTP = N(tele)-(5'-uridylyl)-L-histidyl-[protein] + diphosphate. It carries out the reaction L-seryl-[protein] + UTP = O-(5'-uridylyl)-L-seryl-[protein] + diphosphate. It catalyses the reaction L-tyrosyl-[protein] + UTP = O-(5'-uridylyl)-L-tyrosyl-[protein] + diphosphate. Its function is as follows. Nucleotidyltransferase involved in the post-translational modification of proteins. It can catalyze the addition of adenosine monophosphate (AMP) or uridine monophosphate (UMP) to a protein, resulting in modifications known as AMPylation and UMPylation. This is Protein nucleotidyltransferase YdiU from Gloeobacter violaceus (strain ATCC 29082 / PCC 7421).